Here is a 204-residue protein sequence, read N- to C-terminus: Glycerol-3-phosphate acyltransferase (204 aa).

The next 4 membrane-spanning stretches (helical) occupy residues 8–28 (NAQFFIAAYLIGAIPFGLLLA), 76–96 (GVLVLLFAYFYGVSEATLWGI), 122–142 (MGVMMFMLPLETIIALVVWAL), and 166–186 (FILHPDMAHAPVIIIGFVLLY).

The protein belongs to the PlsY family. In terms of assembly, probably interacts with PlsX.

It localises to the cell inner membrane. The enzyme catalyses an acyl phosphate + sn-glycerol 3-phosphate = a 1-acyl-sn-glycero-3-phosphate + phosphate. It participates in lipid metabolism; phospholipid metabolism. In terms of biological role, catalyzes the transfer of an acyl group from acyl-phosphate (acyl-PO(4)) to glycerol-3-phosphate (G3P) to form lysophosphatidic acid (LPA). This enzyme utilizes acyl-phosphate as fatty acyl donor, but not acyl-CoA or acyl-ACP. The chain is Glycerol-3-phosphate acyltransferase from Sulfurimonas denitrificans (strain ATCC 33889 / DSM 1251) (Thiomicrospira denitrificans (strain ATCC 33889 / DSM 1251)).